The primary structure comprises 63 residues: Serine protease inhibitor 3 (63 aa).

Residues 1–23 (MAKLLAVFLVLLIAALVCEQALA) form the signal peptide. Intrachain disulfides connect C24/C39, C34/C52, and C37/C47. The 32-residue stretch at 24–55 (CTPGSRKYDGCNWCTCSSGGAWICTLKYCPPS) folds into the Pacifastin domain.

This sequence belongs to the protease inhibitor I19 family. Expressed in hemolymph, ovaries, testes and fat body of adults but are absent in the gut. Also present in larval hemolymph and fat body.

Its subcellular location is the secreted. Its function is as follows. In vitro, active against alpha-chymotrypsin. This Schistocerca gregaria (Desert locust) protein is Serine protease inhibitor 3.